The chain runs to 201 residues: 3-isopropylmalate dehydratase small subunit (201 aa).

This sequence belongs to the LeuD family. LeuD type 1 subfamily. As to quaternary structure, heterodimer of LeuC and LeuD.

The enzyme catalyses (2R,3S)-3-isopropylmalate = (2S)-2-isopropylmalate. It participates in amino-acid biosynthesis; L-leucine biosynthesis; L-leucine from 3-methyl-2-oxobutanoate: step 2/4. Its function is as follows. Catalyzes the isomerization between 2-isopropylmalate and 3-isopropylmalate, via the formation of 2-isopropylmaleate. The protein is 3-isopropylmalate dehydratase small subunit of Shewanella piezotolerans (strain WP3 / JCM 13877).